A 496-amino-acid polypeptide reads, in one-letter code: MTDLTTLTIAQARYALTKREFKATELTEAYLKAIELANPTLNTYVAITAEQAMKMATESDSRLARGQGGILEGIPLGIKDLFATQGVHTQACSYILDGFKPPYESTVTANLWRDGAIMLGKLNMDEFAMGSSNETSYYGPVINPWRKKGSNEKLVPGGSSGGSAAAVAAQLCAGATATDTGGSIRQPAAFTGTVGIKPTYGRCSRWGVIAFASSLDQAGPIGRNVRDCAILLKSMASFDEKDSTSVNLPVPDYENYIGQSIKGMEIGVPKEYYLEGMASEIVELWQKGINCLKEAGAKIIDISLPHTKYALPAYYIVAPAEASSNLARYDGVRFGLRVPGKDAIEMYENTRSAGFGDEVKRRILIGTYVLSSGYYDAYYLQAQKVRTLVKRDFDQCFASGIDAILTPATPTPAFGIADEKIKNDTVAMYLNDIFTVPVNMAGLPGISVPSGLSSTGLPLGLQLIGKPFAEEVIFQIAHIIEQAIGTFSTEKWWTQQ.

Catalysis depends on charge relay system residues K79 and S159. S183 functions as the Acyl-ester intermediate in the catalytic mechanism.

This sequence belongs to the amidase family. GatA subfamily. Heterotrimer of A, B and C subunits.

The catalysed reaction is L-glutamyl-tRNA(Gln) + L-glutamine + ATP + H2O = L-glutaminyl-tRNA(Gln) + L-glutamate + ADP + phosphate + H(+). Its function is as follows. Allows the formation of correctly charged Gln-tRNA(Gln) through the transamidation of misacylated Glu-tRNA(Gln) in organisms which lack glutaminyl-tRNA synthetase. The reaction takes place in the presence of glutamine and ATP through an activated gamma-phospho-Glu-tRNA(Gln). This chain is Glutamyl-tRNA(Gln) amidotransferase subunit A, found in Bartonella quintana (strain Toulouse) (Rochalimaea quintana).